The chain runs to 349 residues: Increased DNA methylation 2 (349 aa).

Residues 210 to 230 (EDNAGTCTSGEESDVAAKPEV) are disordered. A sHSP domain is found at 233–349 (EAHGGLMVGL…VMKNLQKQTV (117 aa)).

It belongs to the small heat shock protein (HSP20) family. As to quaternary structure, homodimer or oligomer. May form an 16-mer complex. Interacts with MBD7 (via C-terminus). Interacts with IDM1 (via N-terminus). Interacts with IMD3. Part of a complex made of MBD7, IDM1, IDM2, IDM3 and ROS1. Expressed in cotyledons and hypocotyls in young seedlings.

It is found in the nucleus. Its subcellular location is the nucleoplasm. Functionally, prevents DNA hypermethylation and transcriptional silencing of transgenes and of some endogenous genes. May act as a molecular chaperone of IDM1, regulating its H3K18 acetylation activity. This Arabidopsis thaliana (Mouse-ear cress) protein is Increased DNA methylation 2.